The sequence spans 540 residues: MSRQFTYKSGAAAKGGFSGCSAVLSGGSSSSYRAGGKGLSGGFSSRSLYSLGGARSISFNVASGSGWAGGYGFGRGRASGFAGSMFGSVALGSVCPSLCPPGGIHQVTINKSLLAPLNVELDPEIQKVRAQEREQIKVLNNKFASFIDKVRFLEQQNQVLETKWELLQQLDLNNCKNNLEPILEGYISNLRKQLETLSGDRVRLDSELRSVREVVEDYKKRYEEEINKRTTAENEFVVLKKDVDAAYTSKVELQAKVDALDGEIKFFKCLYEGETAQIQSHISDTSIILSMDNNRNLDLDSIIAEVRAQYEEIARKSKAEAEALYQTKFQELQLAAGRHGDDLKHTKNEISELTRLIQRLRSEIESVKKQCANLETAIADAEQRGDCALKDARAKLDELEGALQQAKEELARMLREYQELLSVKLSLDIEIATYRKLLEGEECRMSGEYTNSVSISVINSSMAGMAGTGAGFGFSNAGTYGYWPSSVSGGYSMLPGGCVTGSGNCSPRGEARTRLGSASEFRDSQGKTLALSSPTKKTMR.

Residues 1-131 are head; the sequence is MSRQFTYKSG…DPEIQKVRAQ (131 aa). The segment at 132–167 is coil 1A; sequence EREQIKVLNNKFASFIDKVRFLEQQNQVLETKWELL. Residues 132 to 445 enclose the IF rod domain; it reads EREQIKVLNN…KLLEGEECRM (314 aa). The segment at 168–186 is linker 1; that stretch reads QQLDLNNCKNNLEPILEGY. Residues 187 to 278 are coil 1B; the sequence is ISNLRKQLET…CLYEGETAQI (92 aa). The interval 279–302 is linker 12; it reads QSHISDTSIILSMDNNRNLDLDSI. The tract at residues 303–441 is coil 2; that stretch reads IAEVRAQYEE…ATYRKLLEGE (139 aa). The segment at 442-540 is tail; it reads ECRMSGEYTN…LSSPTKKTMR (99 aa). Residues 502 to 540 form a disordered region; the sequence is SGNCSPRGEARTRLGSASEFRDSQGKTLALSSPTKKTMR. Polar residues predominate over residues 526–540; sequence GKTLALSSPTKKTMR.

This sequence belongs to the intermediate filament family. As to quaternary structure, heterotetramer of two type I and two type II keratins. Highly expressed in hair follicles from scalp. In hair, it is specifically present in the inner root sheath (IRS) of the hair follicle. Present in the IRS cuticle, but not in Henle or Huxley layers of the IRS. In the IRS cuticle, it is expressed between the lowermost bulb region of the cuticle and the region where Henle cells undergo abrupt terminal differentiation. Detected up to the uppermost cortex region where cuticle cells terminally differentiate (at protein level).

Its function is as follows. Has a role in hair formation. Specific component of keratin intermediate filaments in the inner root sheath (IRS) of the hair follicle. The sequence is that of Keratin, type II cytoskeletal 73 (KRT73) from Homo sapiens (Human).